Here is a 271-residue protein sequence, read N- to C-terminus: Urease accessory protein UreD (271 aa).

The protein belongs to the UreD family. In terms of assembly, ureD, UreF and UreG form a complex that acts as a GTP-hydrolysis-dependent molecular chaperone, activating the urease apoprotein by helping to assemble the nickel containing metallocenter of UreC. The UreE protein probably delivers the nickel.

The protein localises to the cytoplasm. Functionally, required for maturation of urease via the functional incorporation of the urease nickel metallocenter. This is Urease accessory protein UreD from Haemophilus influenzae (strain PittEE).